The sequence spans 351 residues: Maleylacetate reductase (351 aa).

It belongs to the iron-containing alcohol dehydrogenase family. As to quaternary structure, homodimer.

It carries out the reaction 3-oxoadipate + NAD(+) = maleylacetate + NADH + H(+). Its pathway is aromatic compound metabolism. Its function is as follows. Involved in the gamma-resorcylate (2,6-dihydroxybenzoate) catabolism. Catalyzes the reduction of maleylacetate to 3-oxoadipate. The sequence is that of Maleylacetate reductase from Rhizobium sp. (strain MTP-10005).